The primary structure comprises 1513 residues: DNA-directed RNA polymerase subunit beta'' (1513 aa).

4 residues coordinate Zn(2+): C220, C296, C303, and C306. Residues 644 to 769 (RTREKDSENE…EYGNPEEDSV (126 aa)) form a disordered region. Residues 659–679 (NEYRTREEECKTLEDEYRTRE) show a composition bias toward basic and acidic residues. Over residues 680–707 (EEYETLEDEYGIPENEYETLEDEYGILE) the composition is skewed to acidic residues. The span at 726–737 (NKYRPREDKYGT) shows a compositional bias: basic and acidic residues. Over residues 738–767 (LEEDSEDEHGTLEEDSEEDSEDEYGNPEED) the composition is skewed to acidic residues.

Belongs to the RNA polymerase beta' chain family. RpoC2 subfamily. In plastids the minimal PEP RNA polymerase catalytic core is composed of four subunits: alpha, beta, beta', and beta''. When a (nuclear-encoded) sigma factor is associated with the core the holoenzyme is formed, which can initiate transcription. The cofactor is Zn(2+).

It localises to the plastid. The protein resides in the chloroplast. The catalysed reaction is RNA(n) + a ribonucleoside 5'-triphosphate = RNA(n+1) + diphosphate. Its function is as follows. DNA-dependent RNA polymerase catalyzes the transcription of DNA into RNA using the four ribonucleoside triphosphates as substrates. This Oryza sativa (Rice) protein is DNA-directed RNA polymerase subunit beta''.